A 224-amino-acid chain; its full sequence is 7-cyano-7-deazaguanine synthase (224 aa).

Leu-10 to Val-20 contacts ATP. The Zn(2+) site is built by Cys-189, Cys-199, Cys-202, and Cys-205.

Belongs to the QueC family. Requires Zn(2+) as cofactor.

The enzyme catalyses 7-carboxy-7-deazaguanine + NH4(+) + ATP = 7-cyano-7-deazaguanine + ADP + phosphate + H2O + H(+). It functions in the pathway purine metabolism; 7-cyano-7-deazaguanine biosynthesis. In terms of biological role, catalyzes the ATP-dependent conversion of 7-carboxy-7-deazaguanine (CDG) to 7-cyano-7-deazaguanine (preQ(0)). This Pseudomonas putida (strain W619) protein is 7-cyano-7-deazaguanine synthase.